Consider the following 435-residue polypeptide: GTPase Obg (435 aa).

The region spanning 1 to 159 (MAFIDKCKIV…IEVVLELKTI (159 aa)) is the Obg domain. In terms of domain architecture, OBG-type G spans 160–329 (ADIGIIGLPN…MLDDVIKIYF (170 aa)). GTP contacts are provided by residues 166-173 (GLPNAGKS), 191-195 (FTTLN), 212-215 (DIPG), 282-285 (NKID), and 310-312 (SAL). 2 residues coordinate Mg(2+): serine 173 and threonine 193. An OCT domain is found at 355–435 (TPKNKELDKT…IYDITLEFEE (81 aa)).

The protein belongs to the TRAFAC class OBG-HflX-like GTPase superfamily. OBG GTPase family. Monomer. It depends on Mg(2+) as a cofactor.

Its subcellular location is the cytoplasm. An essential GTPase which binds GTP, GDP and possibly (p)ppGpp with moderate affinity, with high nucleotide exchange rates and a fairly low GTP hydrolysis rate. Plays a role in control of the cell cycle, stress response, ribosome biogenesis and in those bacteria that undergo differentiation, in morphogenesis control. The sequence is that of GTPase Obg from Ureaplasma urealyticum serovar 10 (strain ATCC 33699 / Western).